A 212-amino-acid polypeptide reads, in one-letter code: Imidazole glycerol phosphate synthase subunit HisH (212 aa).

Positions 2–212 (RVVVIDYNGG…ILGNFLRWTS (211 aa)) constitute a Glutamine amidotransferase type-1 domain. Cys-85 acts as the Nucleophile in catalysis. Catalysis depends on residues His-192 and Glu-194.

Heterodimer of HisH and HisF.

It is found in the cytoplasm. The catalysed reaction is 5-[(5-phospho-1-deoxy-D-ribulos-1-ylimino)methylamino]-1-(5-phospho-beta-D-ribosyl)imidazole-4-carboxamide + L-glutamine = D-erythro-1-(imidazol-4-yl)glycerol 3-phosphate + 5-amino-1-(5-phospho-beta-D-ribosyl)imidazole-4-carboxamide + L-glutamate + H(+). It carries out the reaction L-glutamine + H2O = L-glutamate + NH4(+). The protein operates within amino-acid biosynthesis; L-histidine biosynthesis; L-histidine from 5-phospho-alpha-D-ribose 1-diphosphate: step 5/9. Functionally, IGPS catalyzes the conversion of PRFAR and glutamine to IGP, AICAR and glutamate. The HisH subunit catalyzes the hydrolysis of glutamine to glutamate and ammonia as part of the synthesis of IGP and AICAR. The resulting ammonia molecule is channeled to the active site of HisF. The chain is Imidazole glycerol phosphate synthase subunit HisH from Gluconobacter oxydans (strain 621H) (Gluconobacter suboxydans).